Consider the following 76-residue polypeptide: Omega-agatoxin-Aa3a (76 aa).

6 disulfides stabilise this stretch: cysteine 2–cysteine 19, cysteine 9–cysteine 25, cysteine 16–cysteine 52, cysteine 18–cysteine 40, cysteine 27–cysteine 38, and cysteine 59–cysteine 67.

Belongs to the neurotoxin 04 (omega-agtx) family. 03 (type II/III omega-agtx) subfamily. As to expression, expressed by the venom gland.

Its subcellular location is the secreted. Its function is as follows. Omega-agatoxin are antagonist of voltage-gated calcium channels. They block insect neuromuscular transmission presynaptically. Potent blocker of N- (Cav2.2/CACNA1B) and L-type (Cav1/CACNA1) calcium channels. The sequence is that of Omega-agatoxin-Aa3a from Agelenopsis aperta (North American funnel-web spider).